The chain runs to 239 residues: uncharacterized protein (239 aa).

This is an uncharacterized protein from Bacillus subtilis (strain 168).